Here is a 123-residue protein sequence, read N- to C-terminus: Heat-labile enterotoxin IIA, B chain (123 aa).

The N-terminal stretch at M1–G19 is a signal peptide. A disulfide bridge connects residues C33 and C104.

Heterohexamer of one A chain and of five B chains.

Functionally, the biological activity of the toxin is produced by the A chain, which activates intracellular adenyl cyclase. The protein is Heat-labile enterotoxin IIA, B chain of Escherichia coli.